Consider the following 516-residue polypeptide: Nuclear speckle splicing regulatory protein 1 (516 aa).

4 disordered regions span residues 1 to 43 (MATS…GESL), 111 to 137 (ERKKEQERRDERKIQKEREAEGEKFAD), 151 to 170 (KERQEELEREKREAELEAAL), and 188 to 494 (QTVG…SSAR). A Phosphoserine modification is found at Ser33. A coiled-coil region spans residues 100–176 (KYINQLLRAV…EAALDVKKQK (77 aa)). A compositionally biased stretch (low complexity) spans 207 to 221 (TSSAAAERSPSPEST). Composition is skewed to basic and acidic residues over residues 222–239 (ANRRESEAESHSDDDQVD) and 271–466 (ERER…KLVE). The stretch at 358–401 (KGERDRRDNSPKDRERDRKGERDRRDNSPKDRERETRDKSPKDR) forms a coiled coil.

Belongs to the NSRP1 family.

The polypeptide is Nuclear speckle splicing regulatory protein 1 (nsrp1) (Danio rerio (Zebrafish)).